Consider the following 331-residue polypeptide: Glyceraldehyde-3-phosphate dehydrogenase 3 (331 aa).

NAD(+) contacts are provided by residues 11–12, aspartate 33, and glutamate 77; that span reads RI. Residue serine 148 is modified to Phosphoserine. 148-150 serves as a coordination point for D-glyceraldehyde 3-phosphate; sequence SCT. Residue cysteine 149 is the Nucleophile of the active site. Serine 177 carries the post-translational modification Phosphoserine. Threonine 179 lines the D-glyceraldehyde 3-phosphate pocket. The residue at position 200 (serine 200) is a Phosphoserine. Residues 208-209 and arginine 231 contribute to the D-glyceraldehyde 3-phosphate site; that span reads TG. Asparagine 313 lines the NAD(+) pocket.

This sequence belongs to the glyceraldehyde-3-phosphate dehydrogenase family. In terms of assembly, homotetramer.

It is found in the cytoplasm. It catalyses the reaction D-glyceraldehyde 3-phosphate + phosphate + NAD(+) = (2R)-3-phospho-glyceroyl phosphate + NADH + H(+). It participates in carbohydrate degradation; glycolysis; pyruvate from D-glyceraldehyde 3-phosphate: step 1/5. The sequence is that of Glyceraldehyde-3-phosphate dehydrogenase 3 from Kluyveromyces marxianus (Yeast).